Here is a 397-residue protein sequence, read N- to C-terminus: UPF0597 protein Tmel_1007 (397 aa).

This sequence belongs to the UPF0597 family.

The protein is UPF0597 protein Tmel_1007 of Thermosipho melanesiensis (strain DSM 12029 / CIP 104789 / BI429).